The following is a 355-amino-acid chain: S-adenosylmethionine:tRNA ribosyltransferase-isomerase (355 aa).

It belongs to the QueA family. Monomer.

It localises to the cytoplasm. It carries out the reaction 7-aminomethyl-7-carbaguanosine(34) in tRNA + S-adenosyl-L-methionine = epoxyqueuosine(34) in tRNA + adenine + L-methionine + 2 H(+). It participates in tRNA modification; tRNA-queuosine biosynthesis. In terms of biological role, transfers and isomerizes the ribose moiety from AdoMet to the 7-aminomethyl group of 7-deazaguanine (preQ1-tRNA) to give epoxyqueuosine (oQ-tRNA). The polypeptide is S-adenosylmethionine:tRNA ribosyltransferase-isomerase (Aeromonas salmonicida (strain A449)).